The chain runs to 176 residues: Putative Ras-related protein RABA4e (176 aa).

It belongs to the small GTPase superfamily. Rab family.

In Arabidopsis thaliana (Mouse-ear cress), this protein is Putative Ras-related protein RABA4e (RABA4E).